A 158-amino-acid polypeptide reads, in one-letter code: Deoxyuridine 5'-triphosphate nucleotidohydrolase (158 aa).

Residues 75–77, Asn-88, 92–94, and Lys-102 contribute to the substrate site; these read RSG and TVD.

It belongs to the dUTPase family. Mg(2+) serves as cofactor.

The enzyme catalyses dUTP + H2O = dUMP + diphosphate + H(+). It functions in the pathway pyrimidine metabolism; dUMP biosynthesis; dUMP from dCTP (dUTP route): step 2/2. This enzyme is involved in nucleotide metabolism: it produces dUMP, the immediate precursor of thymidine nucleotides and it decreases the intracellular concentration of dUTP so that uracil cannot be incorporated into DNA. The chain is Deoxyuridine 5'-triphosphate nucleotidohydrolase from Bifidobacterium longum (strain DJO10A).